Here is a 203-residue protein sequence, read N- to C-terminus: Guanylate kinase (203 aa).

The Guanylate kinase-like domain occupies 3 to 181 (GTLYVVSAPS…TLADLQAIFT (179 aa)). 10–17 (APSGAGKT) is a binding site for ATP.

Belongs to the guanylate kinase family.

The protein localises to the cytoplasm. The enzyme catalyses GMP + ATP = GDP + ADP. Essential for recycling GMP and indirectly, cGMP. The polypeptide is Guanylate kinase (Alkalilimnicola ehrlichii (strain ATCC BAA-1101 / DSM 17681 / MLHE-1)).